Here is a 134-residue protein sequence, read N- to C-terminus: Small ribosomal subunit protein uS8c (134 aa).

The protein belongs to the universal ribosomal protein uS8 family. As to quaternary structure, part of the 30S ribosomal subunit.

It is found in the plastid. Its subcellular location is the chloroplast. Functionally, one of the primary rRNA binding proteins, it binds directly to 16S rRNA central domain where it helps coordinate assembly of the platform of the 30S subunit. The protein is Small ribosomal subunit protein uS8c (rps8) of Gossypium hirsutum (Upland cotton).